A 1192-amino-acid chain; its full sequence is DNA topoisomerase 2 (1192 aa).

Residues asparagine 64, asparagine 95, and 142-149 (GTNGVGLK) each bind ATP. 3 residues coordinate Mg(2+): glutamate 438, aspartate 539, and aspartate 541. The Topo IIA-type catalytic domain maps to 707–1174 (IPNFLDGMTR…PGASVWLEEI (468 aa)). Residue tyrosine 800 is the O-(5'-phospho-DNA)-tyrosine intermediate of the active site.

This sequence belongs to the type II topoisomerase family. Requires Mg(2+) as cofactor. Mn(2+) is required as a cofactor. Ca(2+) serves as cofactor.

It is found in the host cytoplasm. The catalysed reaction is ATP-dependent breakage, passage and rejoining of double-stranded DNA.. Type II topoisomerase. Processively relaxes supercoiled DNA. Displays DNA-supercoiling activity only when associated with the viral histone-like protein. In African swine fever virus (isolate Pig/Kenya/KEN-50/1950) (ASFV), this protein is DNA topoisomerase 2.